Consider the following 131-residue polypeptide: MPVTDSIADYITRIRNAGRAKNKTTDIPYSKLRENISQLLQDKGYIKNFTVITTEKFPFIRIELKYTASGEPSIKEITRVSRPGRRTYEGKDIKKYLGGLGLYILSSSKGVITDKEAREQGVGGEILFRIY.

This sequence belongs to the universal ribosomal protein uS8 family. Part of the 30S ribosomal subunit. Contacts proteins S5 and S12.

In terms of biological role, one of the primary rRNA binding proteins, it binds directly to 16S rRNA central domain where it helps coordinate assembly of the platform of the 30S subunit. This chain is Small ribosomal subunit protein uS8, found in Chlorobium luteolum (strain DSM 273 / BCRC 81028 / 2530) (Pelodictyon luteolum).